We begin with the raw amino-acid sequence, 276 residues long: Rhomboid protease GlpG (276 aa).

6 helical membrane-spanning segments follow: residues Ala94–Ile114, Ala142–Gly162, Val168–Ala188, Ser193–Leu213, Leu229–Ile249, and Ala250–Tyr270. The active-site Nucleophile is the Ser201. His254 is an active-site residue.

The protein belongs to the peptidase S54 family.

Its subcellular location is the cell inner membrane. The catalysed reaction is Cleaves type-1 transmembrane domains using a catalytic dyad composed of serine and histidine that are contributed by different transmembrane domains.. Rhomboid-type serine protease that catalyzes intramembrane proteolysis. This is Rhomboid protease GlpG from Pectobacterium atrosepticum (strain SCRI 1043 / ATCC BAA-672) (Erwinia carotovora subsp. atroseptica).